Consider the following 491-residue polypeptide: Polybrominated aromatic compounds synthase (491 aa).

Cysteine 437 serves as a coordination point for heme.

The protein belongs to the cytochrome P450 family. Heme is required as a cofactor.

Functionally, cytochrome P450 protein involved in the biosynthesis of polybrominated aromatic organic compounds. In the presence of ferredoxin, ferredoxin reductase and NADH, catalyzes the coupling of bromophenols and bromopyrroles, forming various polybrominated biphenyls and hydroxylated polybrominated diphenyl ethers (OH-BDE). Can also mediate the heterocoupling of 3,5-dibromocatechol. Can also use chlorinated phenolic substrates. 2,3,4-tribromopyrrole could be the physiological substrate. In Pseudoalteromonas luteoviolacea (strain 2ta16), this protein is Polybrominated aromatic compounds synthase.